A 56-amino-acid polypeptide reads, in one-letter code: Large ribosomal subunit protein bL32 (56 aa).

It belongs to the bacterial ribosomal protein bL32 family.

The sequence is that of Large ribosomal subunit protein bL32 from Prochlorococcus marinus (strain MIT 9301).